Consider the following 28-residue polypeptide: leu operon leader peptide (28 aa).

Its function is as follows. Involved in control of the biosynthesis of leucine. This chain is leu operon leader peptide (leuL), found in Shigella flexneri.